The sequence spans 1995 residues: Myosin-14 (1995 aa).

The interval 1-46 (MAAVTMSVPGRKAPPRPGPVPEAAQPFLFTPRGPSAGGGPGSGTSP) is disordered. The residue at position 2 (Ala-2) is an N-acetylalanine. The 51-residue stretch at 51-101 (TARRLVWVPSELHGFEAAALRDEGEEEAEVELAESGRRLRLPRDQIQRMNP) folds into the Myosin N-terminal SH3-like domain. A Phosphoserine modification is found at Ser-60. The region spanning 105–800 (SKAEDMAELT…VLAQLEEERD (696 aa)) is the Myosin motor domain. Position 198-205 (198-205 (GESGAGKT)) interacts with ATP. Positions 678–700 (LSRLMATLSNTNPSFVRCIVPNH) are actin-binding. The 30-residue stretch at 803–832 (VTDIIVSFQAAARGYLARRAFQKRQQQQSA) folds into the IQ domain. Residues 862–1947 (LQVTRQDEVL…VTTLRNRLRR (1086 aa)) adopt a coiled-coil conformation. At Thr-1194 the chain carries Phosphothreonine. Disordered regions lie at residues 1371–1415 (EEAA…RRAA), 1592–1623 (QHER…VERD), 1905–1942 (EAEE…TTLR), and 1958–1995 (RQVF…AHPQ). The span at 1930–1942 (SAESMNREVTTLR) shows a compositional bias: polar residues. 4 positions are modified to phosphoserine: Ser-1969, Ser-1980, Ser-1983, and Ser-1989. Residues 1981-1995 (GPSPEPEGSPPAHPQ) show a composition bias toward pro residues.

The protein belongs to the TRAFAC class myosin-kinesin ATPase superfamily. Myosin family. As to quaternary structure, myosin is a hexameric protein that consists of 2 heavy chain subunits (MHC), 2 alkali light chain subunits (MLC) and 2 regulatory light chain subunits (MLC-2). High levels of expression are found in brain (highest in corpus callosum), heart, kidney, liver, lung, small intestine, colon and skeletal muscle. Expression is low in organs composed mainly of smooth muscle, such as aorta, uterus and urinary bladder. No detectable expression is found in thymus, spleen, placenta and lymphocytes.

Functionally, cellular myosin that appears to play a role in cytokinesis, cell shape, and specialized functions such as secretion and capping. This chain is Myosin-14 (MYH14), found in Homo sapiens (Human).